Consider the following 200-residue polypeptide: ATP synthase subunit delta', mitochondrial (200 aa).

The N-terminal 21 residues, 1–21 (MFRHSSRLLARATTMGWRRPF), are a transit peptide targeting the mitochondrion.

Belongs to the ATPase epsilon chain family. In terms of assembly, F-type ATPases have 2 components, CF(1) - the catalytic core - and CF(0) - the membrane proton channel. CF(1) has five subunits: alpha(3), beta(3), gamma(1), delta(1), epsilon(1). CF(0) has three main subunits: a, b and c.

The protein resides in the mitochondrion. It localises to the mitochondrion inner membrane. Mitochondrial membrane ATP synthase (F(1)F(0) ATP synthase or Complex V) produces ATP from ADP in the presence of a proton gradient across the membrane which is generated by electron transport complexes of the respiratory chain. F-type ATPases consist of two structural domains, F(1) - containing the extramembraneous catalytic core, and F(0) - containing the membrane proton channel, linked together by a central stalk and a peripheral stalk. During catalysis, ATP turnover in the catalytic domain of F(1) is coupled via a rotary mechanism of the central stalk subunits to proton translocation. Part of the complex F(1) domain and of the central stalk which is part of the complex rotary element. Rotation of the central stalk against the surrounding alpha(3)beta(3) subunits leads to hydrolysis of ATP in three separate catalytic sites on the beta subunits. The chain is ATP synthase subunit delta', mitochondrial from Ipomoea batatas (Sweet potato).